A 718-amino-acid polypeptide reads, in one-letter code: uncharacterized protein (718 aa).

Belongs to the asfivirus C717R family.

The protein resides in the virion. This is an uncharacterized protein from African swine fever virus (isolate Pig/Kenya/KEN-50/1950) (ASFV).